A 458-amino-acid polypeptide reads, in one-letter code: MKASKGRNVVVVGTQWGDEGKGKLVDWLTESAQGVVRFQGGHNAGHTLVINGVKTALHLIPSGIMRPGVKCYIGNGVVLSAGKLFEEIEGLEKAGVEVRSRLRVSEACPLILPFHAALDVAREAAREHGGAEKIGTTGRGIGPAYEDKIARRALRVQDLKYPERFAAKLRELLALHNHVLSTFLGSANFQFGDALKPYITGGQVQFEPVFEEAMRHAEMLKPMMADVSRELNEAHAAGANLLFEGAQGTLLDVDHGTYPYVTSSNCVAGNAAAGSGVGPGHLHYILGITKAYCTRVGGGPFPTELDWETPGTPGYHMSTVGAEKGVTTGRSRRCGWFDAALLKRSAQVNGLSGLCITKLDVLDGLRELSLCVGYELDGERIDLLPMGAEEIARCVPIYENIAGWTESTVGVTHYENLPSNARRYLERIEQVTGVPIAMISTSPDRDHTILMRHPYAAD.

Residues 17–23 (GDEGKGK) and 45–47 (GHT) each bind GTP. The Proton acceptor role is filled by aspartate 18. Positions 18 and 45 each coordinate Mg(2+). IMP contacts are provided by residues 18 to 21 (DEGK), 43 to 46 (NAGH), threonine 137, arginine 151, glutamine 247, threonine 262, and arginine 330. The active-site Proton donor is histidine 46. A substrate-binding site is contributed by 326-332 (VTTGRSR). GTP is bound by residues arginine 332, 358 to 360 (KLD), and 440 to 442 (STS).

Belongs to the adenylosuccinate synthetase family. As to quaternary structure, homodimer. It depends on Mg(2+) as a cofactor.

The protein localises to the cytoplasm. The enzyme catalyses IMP + L-aspartate + GTP = N(6)-(1,2-dicarboxyethyl)-AMP + GDP + phosphate + 2 H(+). It functions in the pathway purine metabolism; AMP biosynthesis via de novo pathway; AMP from IMP: step 1/2. Functionally, plays an important role in the de novo pathway of purine nucleotide biosynthesis. Catalyzes the first committed step in the biosynthesis of AMP from IMP. The protein is Adenylosuccinate synthetase of Acidovorax sp. (strain JS42).